A 450-amino-acid polypeptide reads, in one-letter code: Phosphoglucosamine mutase (450 aa).

The active-site Phosphoserine intermediate is the S101. Mg(2+) contacts are provided by S101, D242, D244, and D246. A Phosphoserine modification is found at S101.

It belongs to the phosphohexose mutase family. The cofactor is Mg(2+). Post-translationally, activated by phosphorylation.

The catalysed reaction is alpha-D-glucosamine 1-phosphate = D-glucosamine 6-phosphate. Its function is as follows. Catalyzes the conversion of glucosamine-6-phosphate to glucosamine-1-phosphate. This is Phosphoglucosamine mutase from Rhodopseudomonas palustris (strain HaA2).